The following is a 530-amino-acid chain: Bifunctional purine biosynthesis protein PurH (530 aa).

One can recognise an MGS-like domain in the interval 1–148 (MEQARPIRRA…KNHKDVAIVV (148 aa)).

It belongs to the PurH family.

The enzyme catalyses (6R)-10-formyltetrahydrofolate + 5-amino-1-(5-phospho-beta-D-ribosyl)imidazole-4-carboxamide = 5-formamido-1-(5-phospho-D-ribosyl)imidazole-4-carboxamide + (6S)-5,6,7,8-tetrahydrofolate. It carries out the reaction IMP + H2O = 5-formamido-1-(5-phospho-D-ribosyl)imidazole-4-carboxamide. The protein operates within purine metabolism; IMP biosynthesis via de novo pathway; 5-formamido-1-(5-phospho-D-ribosyl)imidazole-4-carboxamide from 5-amino-1-(5-phospho-D-ribosyl)imidazole-4-carboxamide (10-formyl THF route): step 1/1. It participates in purine metabolism; IMP biosynthesis via de novo pathway; IMP from 5-formamido-1-(5-phospho-D-ribosyl)imidazole-4-carboxamide: step 1/1. This Aeromonas salmonicida (strain A449) protein is Bifunctional purine biosynthesis protein PurH.